Here is a 575-residue protein sequence, read N- to C-terminus: Eukaryotic translation initiation factor 3 subunit D (575 aa).

Disordered regions lie at residues 36–66 and 103–177; these read PYSK…YGNR and STRT…DASV. Positions 39-59 are enriched in basic and acidic residues; that stretch reads KGDKLGRMADWTEGKDRERGG. Positions 109–144 are enriched in gly residues; that stretch reads FGRGGGTVFGRGRGQRGGQAQRGGRGTFQRVGGRGG. Residues 163–174 show a composition bias toward basic and acidic residues; sequence GWRDDKPQRNRD. Residues 302–316 are RNA gate; the sequence is NLDMVTVNENAADAP.

The protein belongs to the eIF-3 subunit D family. As to quaternary structure, component of the eukaryotic translation initiation factor 3 (eIF-3) complex.

The protein localises to the cytoplasm. Its function is as follows. mRNA cap-binding component of the eukaryotic translation initiation factor 3 (eIF-3) complex, which is involved in protein synthesis of a specialized repertoire of mRNAs and, together with other initiation factors, stimulates binding of mRNA and methionyl-tRNAi to the 40S ribosome. The eIF-3 complex specifically targets and initiates translation of a subset of mRNAs involved in cell proliferation. In the eIF-3 complex, eif3d specifically recognizes and binds the 7-methylguanosine cap of a subset of mRNAs. The protein is Eukaryotic translation initiation factor 3 subunit D of Phaeosphaeria nodorum (strain SN15 / ATCC MYA-4574 / FGSC 10173) (Glume blotch fungus).